We begin with the raw amino-acid sequence, 460 residues long: Ribosome biogenesis protein YTM1 (460 aa).

Residues 8–89 are ubiquitin-like (UBL) domain; that stretch reads VKIRFFTREK…EASLNVEYTR (82 aa). The tract at residues 99 to 460 is sufficient for interaction with ERB1 and association with 66S pre-ribosomes; that stretch reads SFSNEDWVSS…INKGDNIFKN (362 aa). 7 WD repeats span residues 101 to 140, 142 to 180, 206 to 244, 285 to 325, 327 to 366, 373 to 413, and 424 to 460; these read SNED…QKQY, GHSG…LKLT, GHKA…MTVV, SHTA…CIDT, TTSY…SSKV, GHKN…PMYT, and GVND…IFKN.

The protein belongs to the WD repeat WDR12/YTM1 family. In terms of assembly, component of the NOP7 complex, composed of ERB1, NOP7 and YTM1. The complex is held together by ERB1, which interacts with NOP7 via its N-terminal domain and with YTM1 via a high-affinity interaction between the seven-bladed beta-propeller domains of the 2 proteins. The NOP7 complex associates with the 66S pre-ribosome. Interacts (via UBL domain) with MDN1 (via VWFA/MIDAS domain).

The protein resides in the nucleus. Its subcellular location is the nucleolus. The protein localises to the nucleoplasm. Component of the NOP7 complex, which is required for maturation of the 25S and 5.8S ribosomal RNAs and formation of the 60S ribosome. The chain is Ribosome biogenesis protein YTM1 from Saccharomyces cerevisiae (strain YJM789) (Baker's yeast).